A 295-amino-acid chain; its full sequence is Bifunctional protein FolD 1 (295 aa).

NADP(+) contacts are provided by residues 165-167 (GKS), Ile-190, and Ile-231.

The protein belongs to the tetrahydrofolate dehydrogenase/cyclohydrolase family. Homodimer.

It carries out the reaction (6R)-5,10-methylene-5,6,7,8-tetrahydrofolate + NADP(+) = (6R)-5,10-methenyltetrahydrofolate + NADPH. The catalysed reaction is (6R)-5,10-methenyltetrahydrofolate + H2O = (6R)-10-formyltetrahydrofolate + H(+). It functions in the pathway one-carbon metabolism; tetrahydrofolate interconversion. Catalyzes the oxidation of 5,10-methylenetetrahydrofolate to 5,10-methenyltetrahydrofolate and then the hydrolysis of 5,10-methenyltetrahydrofolate to 10-formyltetrahydrofolate. In Rhizorhabdus wittichii (strain DSM 6014 / CCUG 31198 / JCM 15750 / NBRC 105917 / EY 4224 / RW1) (Sphingomonas wittichii), this protein is Bifunctional protein FolD 1.